The chain runs to 454 residues: Bifunctional protein GlmU (454 aa).

The tract at residues 1 to 226 is pyrophosphorylase; the sequence is MSLEIVILAA…AMEVQGVNDR (226 aa). UDP-N-acetyl-alpha-D-glucosamine contacts are provided by residues 8–11, Lys22, Gln73, 78–79, 99–101, Gly136, Glu151, Asn166, and Asn224; these read LAAG, GT, and YGD. Residue Asp101 coordinates Mg(2+). A Mg(2+)-binding site is contributed by Asn224. A linker region spans residues 227-247; the sequence is MQQAQLERHYQRLRAEELMRQ. An N-acetyltransferase region spans residues 248–454; that stretch reads GVTLLDPQRL…NWKRPEKIRK (207 aa). The UDP-N-acetyl-alpha-D-glucosamine site is built by Arg330 and Lys348. Catalysis depends on His360, which acts as the Proton acceptor. Tyr363 and Asn374 together coordinate UDP-N-acetyl-alpha-D-glucosamine. Acetyl-CoA contacts are provided by residues Ala377, 383–384, Ser402, Ala420, and Arg437; that span reads NY.

It in the N-terminal section; belongs to the N-acetylglucosamine-1-phosphate uridyltransferase family. The protein in the C-terminal section; belongs to the transferase hexapeptide repeat family. Homotrimer. Mg(2+) serves as cofactor.

It is found in the cytoplasm. The enzyme catalyses alpha-D-glucosamine 1-phosphate + acetyl-CoA = N-acetyl-alpha-D-glucosamine 1-phosphate + CoA + H(+). It carries out the reaction N-acetyl-alpha-D-glucosamine 1-phosphate + UTP + H(+) = UDP-N-acetyl-alpha-D-glucosamine + diphosphate. It functions in the pathway nucleotide-sugar biosynthesis; UDP-N-acetyl-alpha-D-glucosamine biosynthesis; N-acetyl-alpha-D-glucosamine 1-phosphate from alpha-D-glucosamine 6-phosphate (route II): step 2/2. It participates in nucleotide-sugar biosynthesis; UDP-N-acetyl-alpha-D-glucosamine biosynthesis; UDP-N-acetyl-alpha-D-glucosamine from N-acetyl-alpha-D-glucosamine 1-phosphate: step 1/1. Its pathway is bacterial outer membrane biogenesis; LPS lipid A biosynthesis. Catalyzes the last two sequential reactions in the de novo biosynthetic pathway for UDP-N-acetylglucosamine (UDP-GlcNAc). The C-terminal domain catalyzes the transfer of acetyl group from acetyl coenzyme A to glucosamine-1-phosphate (GlcN-1-P) to produce N-acetylglucosamine-1-phosphate (GlcNAc-1-P), which is converted into UDP-GlcNAc by the transfer of uridine 5-monophosphate (from uridine 5-triphosphate), a reaction catalyzed by the N-terminal domain. This is Bifunctional protein GlmU from Pseudomonas paraeruginosa (strain DSM 24068 / PA7) (Pseudomonas aeruginosa (strain PA7)).